The sequence spans 582 residues: Membrane-bound O-acyltransferase GUP1 (582 aa).

The Extracellular segment spans residues 1-61; that stretch reads MVIPRYHLIP…IIKQANPKSR (61 aa). A helical membrane pass occupies residues 62 to 82; the sequence is WSTIEFKFYYLVFLIIVPLMF. Residues 83–121 lie on the Cytoplasmic side of the membrane; that stretch reads KAGMESANENNPNYPKYEHLLSNGWIFGRKVDNSDQQYR. The helical transmembrane segment at 122-144 threads the bilayer; it reads FFRNNFPLLCLLIIIHVGLRRVI. Residues 145–158 are Extracellular-facing; the sequence is NRIIPLSSKRTYFD. The chain crosses the membrane as a helical span at residues 159 to 179; it reads FIFGIIFLIGAHGVNVLKLSI. The Cytoplasmic portion of the chain corresponds to 180-195; that stretch reads HLLINYLIGKYIKNYK. Residues 196-216 traverse the membrane as a helical segment; that stretch reads LSLWITWIYGISSLFFNEWYG. The Extracellular portion of the chain corresponds to 217-294; that stretch reads NYTLGLSFLS…TAPLPIEDYN (78 aa). Residues 295–315 form a helical membrane-spanning segment; the sequence is IFNYISYLTYTPLFIAGPILT. Residues 316–343 lie on the Cytoplasmic side of the membrane; the sequence is FNDYIYQSNYQQSSSTKDYHRIMMYLIR. The helical transmembrane segment at 344–364 threads the bilayer; that stretch reads FIFCLLTLEFILHFMYVVAAS. Topologically, residues 365–373 are extracellular; the sequence is KTKSWEGNL. Residues 374-394 form a helical membrane-spanning segment; it reads PFQISMLGMFNLNIIWLKLLI. Over 395–454 the chain is Cytoplasmic; it reads PWRLFRLWSLLDGIDPPENMIRCMDNNFSALAFWRAWHRSYNRWIIRYIYLPMGGGGKYR. The next 2 membrane-spanning stretches (helical) occupy residues 455–475 and 476–496; these read ILNS…ELKL and LMWG…TMIF. Histidine 469 is a catalytic residue. The Cytoplasmic segment spans residues 497–507; the sequence is KKYRNQWWYRH. The chain crosses the membrane as a helical span at residues 508-528; it reads LCGVGAVINIWMMMIANLVGF. The Extracellular portion of the chain corresponds to 529-548; that stretch reads CLGTDGMWKLLHDLFKTFDG. Residues 549-569 traverse the membrane as a helical segment; that stretch reads VRFLIISSGALFVGAQIMFEI. Residues 570-582 lie on the Cytoplasmic side of the membrane; sequence RESEMRKGINVRC.

It belongs to the membrane-bound acyltransferase family.

Its subcellular location is the cell membrane. It localises to the endoplasmic reticulum membrane. It is found in the mitochondrion membrane. Membrane-bound O-acyltransferase involved in the remodeling of glycosylphosphatidylinositol (GPI) anchors. Acts only on GPI-anchored proteins, but not on free GPI lipids. Also involved in lipid metabolism, having profound effects on sphingolipid-sterol-ordered domains integrity and assembly. Involved in cell integrity and apoptosis. In Candida tropicalis (Yeast), this protein is Membrane-bound O-acyltransferase GUP1 (GUP1).